The sequence spans 59 residues: Large ribosomal subunit protein bL32 (59 aa).

It belongs to the bacterial ribosomal protein bL32 family.

This Lactiplantibacillus plantarum (strain ATCC BAA-793 / NCIMB 8826 / WCFS1) (Lactobacillus plantarum) protein is Large ribosomal subunit protein bL32.